The chain runs to 688 residues: Elongation factor G 2 (688 aa).

One can recognise a tr-type G domain in the interval D7 to R282. GTP is bound by residues S16–T23, D80–H84, and N134–D137.

The protein belongs to the TRAFAC class translation factor GTPase superfamily. Classic translation factor GTPase family. EF-G/EF-2 subfamily.

It localises to the cytoplasm. In terms of biological role, catalyzes the GTP-dependent ribosomal translocation step during translation elongation. During this step, the ribosome changes from the pre-translocational (PRE) to the post-translocational (POST) state as the newly formed A-site-bound peptidyl-tRNA and P-site-bound deacylated tRNA move to the P and E sites, respectively. Catalyzes the coordinated movement of the two tRNA molecules, the mRNA and conformational changes in the ribosome. The protein is Elongation factor G 2 of Geobacter metallireducens (strain ATCC 53774 / DSM 7210 / GS-15).